Consider the following 349-residue polypeptide: Meiotic recombination protein DMC1 homolog (349 aa).

138–145 (GEFRSGKT) is an ATP binding site. A dsDNA-binding site is contributed by R240. Residues R240, F243, R246, R252, and R320 each contribute to the ssDNA site. Residues R246 and R252 each coordinate dsDNA.

This sequence belongs to the RecA family. DMC1 subfamily. In terms of assembly, double stacked ring-shaped homooctamer.

The protein localises to the nucleus. May participate in meiotic recombination. This is Meiotic recombination protein DMC1 homolog (LIM15) from Lilium longiflorum (Trumpet lily).